A 367-amino-acid chain; its full sequence is Leu/Ile/Val-binding protein (367 aa).

Positions 1–23 (MNMKGKALLAGCIALSLSNMAFA) are cleaved as a signal peptide. The cysteines at positions 76 and 101 are disulfide-linked.

Belongs to the leucine-binding protein family.

Its subcellular location is the periplasm. This protein is a component of the leucine, isoleucine, valine, (threonine) transport system, which is one of the two periplasmic binding protein-dependent transport systems of the high-affinity transport of the branched-chain amino acids. This chain is Leu/Ile/Val-binding protein (livJ), found in Citrobacter freundii.